The sequence spans 222 residues: Triosephosphate isomerase (222 aa).

9–11 (NYK) is a substrate binding site. The Electrophile role is filled by His93. Catalysis depends on Glu141, which acts as the Proton acceptor. Substrate is bound by residues Ile146, Gly181, and 202–203 (AS).

This sequence belongs to the triosephosphate isomerase family. Homotetramer; dimer of dimers.

It localises to the cytoplasm. The catalysed reaction is D-glyceraldehyde 3-phosphate = dihydroxyacetone phosphate. Its pathway is carbohydrate biosynthesis; gluconeogenesis. It participates in carbohydrate degradation; glycolysis; D-glyceraldehyde 3-phosphate from glycerone phosphate: step 1/1. Involved in the gluconeogenesis. Catalyzes stereospecifically the conversion of dihydroxyacetone phosphate (DHAP) to D-glyceraldehyde-3-phosphate (G3P). The polypeptide is Triosephosphate isomerase (Methanosarcina mazei (strain ATCC BAA-159 / DSM 3647 / Goe1 / Go1 / JCM 11833 / OCM 88) (Methanosarcina frisia)).